Reading from the N-terminus, the 562-residue chain is Zinc finger protein 579 (562 aa).

The segment covering 1-11 has biased composition (pro residues); sequence MDPQPPPPAQG. A disordered region spans residues 1-43; that stretch reads MDPQPPPPAQGSPPHRGRGRGRGRGRGRGRGRGRGGAGAPRAP. Residues 15–33 are compositionally biased toward basic residues; the sequence is HRGRGRGRGRGRGRGRGRG. 3 consecutive C2H2-type zinc fingers follow at residues 44–66, 72–94, and 100–123; these read LPCPTCGRLFRFPYYLSRHRLSH, HACPLCPKAFRRPAHLSRHLRGH, and LRCAACPRTFPEPAQLRRHLAQEH. R92 is subject to Omega-N-methylarginine. The interval 139–203 is disordered; it reads TAEPSWGPQD…SESEEAEAGA (65 aa). 2 positions are modified to phosphoserine: S194 and S196. 2 consecutive C2H2-type zinc fingers follow at residues 270 to 292 and 298 to 320; these read HQCSICLKAFARPWSLSRHRLVH and FVCPDCGLAFRLASYLRQHRRVH. The interval 327–379 is disordered; that stretch reads APLPAAGKKDDKASGARNSAKGPEGGEGAECGGASEGGEGQNGGDAAPARPPA. The segment covering 349–369 has biased composition (gly residues); it reads PEGGEGAECGGASEGGEGQNG. 3 C2H2-type zinc fingers span residues 384 to 406, 412 to 434, and 441 to 463; these read FWCPECGKGFRRRAHLRQHGVTH, FQCVRCQREFKRLADLARHAQVH, and HPCPRCPRRFSRAYSLLRHQRCH. The segment at 477 to 562 is disordered; the sequence is QAQAPTSPPP…HLRGLGGLAS (86 aa). Pro residues-rich tracts occupy residues 482 to 491 and 512 to 525; these read TSPPPPPPPL and PSPGTPPQSPPAPP. A Phosphoserine modification is found at S483.

The protein belongs to the krueppel C2H2-type zinc-finger protein family.

It is found in the nucleus. Its function is as follows. May be involved in transcriptional regulation. The chain is Zinc finger protein 579 (ZNF579) from Homo sapiens (Human).